The following is a 485-amino-acid chain: MKNFKGRKFLTCVLVSLCTLNYSSISFAETQAGHANDITKNASSIDTGIGNLTYNNQEVLAVNGDKVESFVPKESINSNGKFVVVDVRKNHLQRHQSIFRLLDSVANRTYPGAVQLANKAFADNQPSLLVAKRKPLNISIDLPGMRKENTITVQNPTYGNVAGAVDDLVSTWNEKYSATHTLPARMQYTESMVYSKAQIASALNVNAKYLDNSLNIDFNAVANGEKKVMVAAYKQIFYTVSAELPNNPSDLFDNSVTFGELTRKGVSNSAPPVMVSNVAYGRTVYVKLETTSKSKDVQAAFKALLKNNSVETSGQYKDIFEESTFTAVVLGGDAKEHNKVVTKDFNEIRNIIKDNAELSFKNPAYPISYTSTFLKDNATAAVHNNTDYIETTTTEYSSAKMTLDHYGAYVAQFDVSWDGFTFDQNGKEILTHKTWEGSGKDKTAHYSTVIPLPPNSKNIKIVARECTGLAWEWWRTIIKMNKMFH.

Positions 1–28 are cleaved as a signal peptide; it reads MKNFKGRKFLTCVLVSLCTLNYSSISFA. The next 4 beta stranded transmembrane spans lie at 196 to 209, 216 to 225, 294 to 303, and 311 to 323; these read KAQI…NAKY, IDFNAVANGE, SKDVQAAFKA, and ETSG…FEES. Residues 465 to 475 carry the Conserved undecapeptide motif; that stretch reads ECTGLAWEWWR.

This sequence belongs to the cholesterol-dependent cytolysin family. Homooligomeric pore complex of 35 to 50 subunits; when inserted in the host membrane.

The protein localises to the secreted. It localises to the host cell membrane. Its function is as follows. A cholesterol-dependent toxin with hemolytic activity against host red blood cells. Causes cytolysis by forming pores in cholesterol containing host membranes. binding to target membranes, the protein undergoes a major conformation change, leading to its insertion in the host membrane and formation of an oligomeric pore complex. Cholesterol is required for binding to host membranes, membrane insertion and pore formation; cholesterol binding is mediated by a Thr-Leu pair in the C-terminus. Can be reversibly inactivated by oxidation. The sequence is that of Hemolysin from Bacillus cereus.